A 282-amino-acid polypeptide reads, in one-letter code: MERNVILAKNAGFCFGVKRAVDEAIKYQKEFGKKIYTLGPLIHNNDVVNYLEDNDIFAIELSDTNSLNKGDVVLIRSHGVKESVIKDLTDKGLIVKNATCPYVTNIQLKVKKCYEQGYKIIIVGDENHPEVIGINGWCNDSAIITNGKTELENIPAKVCVVSQTTEKKETWNKVLNEIVKESKEIVAFNTICSATDVRQKSVQELSKEADLVFVIGGKNSSNTTKLYEICKKECPKSYHIENVKELDESLLEDESVKTIGITAGASTPDWIINEVISKIKEL.

Cys-14 contributes to the [4Fe-4S] cluster binding site. The (2E)-4-hydroxy-3-methylbut-2-enyl diphosphate site is built by His-43 and His-78. Positions 43 and 78 each coordinate dimethylallyl diphosphate. The isopentenyl diphosphate site is built by His-43 and His-78. Cys-100 contributes to the [4Fe-4S] cluster binding site. His-128 contributes to the (2E)-4-hydroxy-3-methylbut-2-enyl diphosphate binding site. A dimethylallyl diphosphate-binding site is contributed by His-128. Position 128 (His-128) interacts with isopentenyl diphosphate. Glu-130 acts as the Proton donor in catalysis. Position 164 (Thr-164) interacts with (2E)-4-hydroxy-3-methylbut-2-enyl diphosphate. [4Fe-4S] cluster is bound at residue Cys-192. Positions 220, 221, 222, and 266 each coordinate (2E)-4-hydroxy-3-methylbut-2-enyl diphosphate. 4 residues coordinate dimethylallyl diphosphate: Ser-220, Ser-221, Asn-222, and Ser-266. Ser-220, Ser-221, Asn-222, and Ser-266 together coordinate isopentenyl diphosphate.

It belongs to the IspH family. It depends on [4Fe-4S] cluster as a cofactor.

The enzyme catalyses isopentenyl diphosphate + 2 oxidized [2Fe-2S]-[ferredoxin] + H2O = (2E)-4-hydroxy-3-methylbut-2-enyl diphosphate + 2 reduced [2Fe-2S]-[ferredoxin] + 2 H(+). The catalysed reaction is dimethylallyl diphosphate + 2 oxidized [2Fe-2S]-[ferredoxin] + H2O = (2E)-4-hydroxy-3-methylbut-2-enyl diphosphate + 2 reduced [2Fe-2S]-[ferredoxin] + 2 H(+). The protein operates within isoprenoid biosynthesis; dimethylallyl diphosphate biosynthesis; dimethylallyl diphosphate from (2E)-4-hydroxy-3-methylbutenyl diphosphate: step 1/1. It participates in isoprenoid biosynthesis; isopentenyl diphosphate biosynthesis via DXP pathway; isopentenyl diphosphate from 1-deoxy-D-xylulose 5-phosphate: step 6/6. Functionally, catalyzes the conversion of 1-hydroxy-2-methyl-2-(E)-butenyl 4-diphosphate (HMBPP) into a mixture of isopentenyl diphosphate (IPP) and dimethylallyl diphosphate (DMAPP). Acts in the terminal step of the DOXP/MEP pathway for isoprenoid precursor biosynthesis. This is 4-hydroxy-3-methylbut-2-enyl diphosphate reductase from Clostridium perfringens (strain SM101 / Type A).